We begin with the raw amino-acid sequence, 260 residues long: Probable carbohydrate esterase At4g34215 (260 aa).

The disordered stretch occupies residues 1–22 (MEGGSITPGEDKPEIQSPIPPN). Catalysis depends on residues S31, D235, and H238.

It belongs to the carbohydrate esterase 6 family.

This Arabidopsis thaliana (Mouse-ear cress) protein is Probable carbohydrate esterase At4g34215.